Reading from the N-terminus, the 277-residue chain is Putative ankyrin repeat protein L81 (277 aa).

2 ANK repeats span residues 150-179 (FGQTPMWIATTRCNYRNYVFLKKHGSDLHQ) and 183-215 (QGRSLLHATANAVNSECLDIFKDLIANGVDLYQ).

The protein is Putative ankyrin repeat protein L81 of Acanthamoeba polyphaga (Amoeba).